The primary structure comprises 201 residues: Small ribosomal subunit protein uS4c (201 aa).

The 61-residue stretch at 89–149 folds into the S4 RNA-binding domain; sequence MRLDNILFRL…DKPKSGALIK (61 aa).

The protein belongs to the universal ribosomal protein uS4 family. Part of the 30S ribosomal subunit. Contacts protein S5. The interaction surface between S4 and S5 is involved in control of translational fidelity.

Its subcellular location is the plastid. In terms of biological role, one of the primary rRNA binding proteins, it binds directly to 16S rRNA where it nucleates assembly of the body of the 30S subunit. Its function is as follows. With S5 and S12 plays an important role in translational accuracy. This is Small ribosomal subunit protein uS4c (rps4) from Cuscuta reflexa (Southern Asian dodder).